An 88-amino-acid chain; its full sequence is Large ribosomal subunit protein bL27 (88 aa).

Positions 1–23 (MAHKKAGGSSRNGRDSAGRRLGV) are disordered.

It belongs to the bacterial ribosomal protein bL27 family.

This Methylorubrum populi (strain ATCC BAA-705 / NCIMB 13946 / BJ001) (Methylobacterium populi) protein is Large ribosomal subunit protein bL27.